The sequence spans 464 residues: UDP-N-acetylmuramate--L-alanine ligase (464 aa).

117–123 (GTHGKTT) contacts ATP.

The protein belongs to the MurCDEF family.

Its subcellular location is the cytoplasm. The catalysed reaction is UDP-N-acetyl-alpha-D-muramate + L-alanine + ATP = UDP-N-acetyl-alpha-D-muramoyl-L-alanine + ADP + phosphate + H(+). Its pathway is cell wall biogenesis; peptidoglycan biosynthesis. Cell wall formation. This chain is UDP-N-acetylmuramate--L-alanine ligase, found in Streptomyces avermitilis (strain ATCC 31267 / DSM 46492 / JCM 5070 / NBRC 14893 / NCIMB 12804 / NRRL 8165 / MA-4680).